Consider the following 607-residue polypeptide: 1-deoxy-D-xylulose-5-phosphate synthase (607 aa).

Thiamine diphosphate is bound by residues His-63 and 104–106; that span reads GHS. Asp-135 contributes to the Mg(2+) binding site. Residues 136–137, Asn-164, Tyr-271, and Glu-351 each bind thiamine diphosphate; that span reads GA. Asn-164 provides a ligand contact to Mg(2+).

Belongs to the transketolase family. DXPS subfamily. As to quaternary structure, homodimer. The cofactor is Mg(2+). Requires thiamine diphosphate as cofactor.

It carries out the reaction D-glyceraldehyde 3-phosphate + pyruvate + H(+) = 1-deoxy-D-xylulose 5-phosphate + CO2. Its pathway is metabolic intermediate biosynthesis; 1-deoxy-D-xylulose 5-phosphate biosynthesis; 1-deoxy-D-xylulose 5-phosphate from D-glyceraldehyde 3-phosphate and pyruvate: step 1/1. Catalyzes the acyloin condensation reaction between C atoms 2 and 3 of pyruvate and glyceraldehyde 3-phosphate to yield 1-deoxy-D-xylulose-5-phosphate (DXP). This chain is 1-deoxy-D-xylulose-5-phosphate synthase, found in Campylobacter hominis (strain ATCC BAA-381 / DSM 21671 / CCUG 45161 / LMG 19568 / NCTC 13146 / CH001A).